A 274-amino-acid chain; its full sequence is Diaminopimelate epimerase (274 aa).

Residues asparagine 11, glutamine 44, and asparagine 64 each coordinate substrate. The active-site Proton donor is cysteine 73. Substrate is bound by residues 74-75, asparagine 157, asparagine 190, and 208-209; these read GN and ER. Residue cysteine 217 is the Proton acceptor of the active site. 218-219 lines the substrate pocket; it reads GS.

This sequence belongs to the diaminopimelate epimerase family. Homodimer.

Its subcellular location is the cytoplasm. It carries out the reaction (2S,6S)-2,6-diaminopimelate = meso-2,6-diaminopimelate. It participates in amino-acid biosynthesis; L-lysine biosynthesis via DAP pathway; DL-2,6-diaminopimelate from LL-2,6-diaminopimelate: step 1/1. In terms of biological role, catalyzes the stereoinversion of LL-2,6-diaminopimelate (L,L-DAP) to meso-diaminopimelate (meso-DAP), a precursor of L-lysine and an essential component of the bacterial peptidoglycan. This chain is Diaminopimelate epimerase, found in Actinobacillus succinogenes (strain ATCC 55618 / DSM 22257 / CCUG 43843 / 130Z).